Here is a 1578-residue protein sequence, read N- to C-terminus: Chitinase ChiA (1578 aa).

The N-terminal stretch at 1 to 19 (MKHYYRLLFLLLFPLLASA) is a signal peptide. Residues 25-466 (KKVVGYYAQW…NQVDTSFGSV (442 aa)) enclose the GH18 1 domain. Residues 26–446 (KVVGYYAQWS…GGMIWELSQD (421 aa)) form a GH18N region. Chitin is bound by residues 92-93 (DA) and 119-122 (GGWT). The active-site Proton donor is the E162. Chitin contacts are provided by residues Y163, 249-252 (FGYD), and W441. A CNA-B domain is found at 485-536 (TDVTVELRNASNAVIQTVVSANGNFAFNNLTSGQNYSLTALKATYTFTPVTL). Residues 1142 to 1462 (KIILGYAHSW…GLMTWSVNWD (321 aa)) form a GH18C region. The GH18 2 domain occupies 1142-1483 (KIILGYAHSW…KAYAAYFASQ (342 aa)). Residue E1264 is the Proton donor of the active site. A CTD region spans residues 1473 to 1578 (SKAYAAYFAS…KSFKVMNFLN (106 aa)).

This sequence belongs to the glycosyl hydrolase 18 family. Chitinase class II subfamily.

Its subcellular location is the secreted. It carries out the reaction Random endo-hydrolysis of N-acetyl-beta-D-glucosaminide (1-&gt;4)-beta-linkages in chitin and chitodextrins.. Its function is as follows. Major extracellular chitinase, which is essential for chitin utilization. The polypeptide is Chitinase ChiA (chiA) (Flavobacterium johnsoniae (strain ATCC 17061 / DSM 2064 / JCM 8514 / BCRC 14874 / CCUG 350202 / NBRC 14942 / NCIMB 11054 / UW101) (Cytophaga johnsonae)).